Here is a 438-residue protein sequence, read N- to C-terminus: V-type ATP synthase beta chain (438 aa).

It belongs to the ATPase alpha/beta chains family.

Produces ATP from ADP in the presence of a proton gradient across the membrane. The V-type beta chain is a regulatory subunit. The chain is V-type ATP synthase beta chain from Chlamydia abortus (strain DSM 27085 / S26/3) (Chlamydophila abortus).